The following is a 415-amino-acid chain: Serine/threonine transporter SstT (415 aa).

8 helical membrane passes run 23 to 43 (ILIG…AAIA), 47 to 67 (LGTL…LMLV), 85 to 105 (ILFL…LFSF), 144 to 164 (ALLN…GFAL), 181 to 201 (AVTF…FGLV), 220 to 240 (LLVL…LLVF), 293 to 313 (IPLG…VLTL), and 333 to 353 (VVAS…LLLI).

Belongs to the dicarboxylate/amino acid:cation symporter (DAACS) (TC 2.A.23) family.

Its subcellular location is the cell inner membrane. The enzyme catalyses L-serine(in) + Na(+)(in) = L-serine(out) + Na(+)(out). The catalysed reaction is L-threonine(in) + Na(+)(in) = L-threonine(out) + Na(+)(out). Functionally, involved in the import of serine and threonine into the cell, with the concomitant import of sodium (symport system). The polypeptide is Serine/threonine transporter SstT (Klebsiella pneumoniae subsp. pneumoniae (strain ATCC 700721 / MGH 78578)).